The sequence spans 185 residues: MAAQKDQQKDAEVEGLSATTLLPKLIPSGAGREWLERRRATIRPWGTFVDQQRFSRPRNVGELCQRLVRNVEYYQSNYVFVFLGLILYCVVTSPMLLVALAVFFGACYILYLRTLQSKLVLFGREVSPAHQYALAGGVSFPFFWLAGAGSAVFWVLGATLVLIGSHAAFHQIEPADGEELQMEPV.

Residues 1–78 are Cytoplasmic-facing; sequence MAAQKDQQKD…RNVEYYQSNY (78 aa). Positions 30–54 are required for interaction with prenylated RAB3A and VAMP2; the sequence is AGREWLERRRATIRPWGTFVDQQRF. A run of 2 helical transmembrane segments spans residues 79 to 94 and 95 to 112; these read VFVF…VTSP and MLLV…ILYL. Topologically, residues 113-131 are cytoplasmic; the sequence is RTLQSKLVLFGREVSPAHQ. The next 2 helical transmembrane spans lie at 132-148 and 149-165; these read YALA…LAGA and GSAV…LIGS. The required for interaction with GDI1 stretch occupies residues 165-185; the sequence is SHAAFHQIEPADGEELQMEPV. Residues 166 to 185 lie on the Cytoplasmic side of the membrane; it reads HAAFHQIEPADGEELQMEPV. Residues 175–185 form a required for interaction with prenylated RAB3A and VAMP2 region; sequence ADGEELQMEPV. The homodimerization stretch occupies residues 175 to 185; sequence ADGEELQMEPV.

Belongs to the PRA1 family. As to quaternary structure, homodimers. Interacts specifically with both prenylated Rab proteins (including RAB3A and RAB1), and VAMP2 (synaptobrevin-2), in an exclusive way. Interacts with NDRG1. Interacts with free GDI1 in the absence of Rab proteins. Also interacts with PCLO. As to expression, ubiquitous.

Its subcellular location is the cell membrane. It is found in the cytoplasm. The protein localises to the golgi apparatus. It localises to the cytoplasmic vesicle. The protein resides in the secretory vesicle. Its subcellular location is the synaptic vesicle. In terms of biological role, general Rab protein regulator required for vesicle formation from the Golgi complex. May control vesicle docking and fusion by mediating the action of Rab GTPases to the SNARE complexes. In addition it inhibits the removal of Rab GTPases from the membrane by GDI1. The protein is Prenylated Rab acceptor protein 1 (Rabac1) of Rattus norvegicus (Rat).